A 197-amino-acid chain; its full sequence is Cerebellin-3 (197 aa).

A signal peptide spans 1–24 (MGTEWHKPKLSLALVLLTLEAGWA). One can recognise a C1q domain in the interval 59 to 197 (APPGRVAFAA…SFSGFLIFPL (139 aa)). The interval 64–197 (VAFAAVRSHH…SFSGFLIFPL (134 aa)) is necessary for interaction with CBLN3, and homotrimerization. N-linked (GlcNAc...) asparagine glycosylation is present at Asn82.

As to quaternary structure, heterohexamer; disulfide-linked heterotrimers. Interacts with CBLN1. May also form oligomers with CBLN2 and CBLN4. In terms of tissue distribution, expressed in brain, restricted to the cerebellar cortex. Within the cerebellum, expressed in granule layers (at protein level). Also detected in postsynaptic Purkinje cell spines (at protein level).

Its subcellular location is the endoplasmic reticulum. The protein resides in the golgi apparatus. The protein localises to the cis-Golgi network. It is found in the secreted. It localises to the synapse. In terms of biological role, may be involved in synaptic functions in the CNS. The protein is Cerebellin-3 (Cbln3) of Mus musculus (Mouse).